The chain runs to 1091 residues: Isoleucine--tRNA ligase (1091 aa).

Positions 48–58 match the 'HIGH' region motif; sequence PFATGLPHFGH. The short motif at 625-629 is the 'KMSKS' region element; that stretch reads KMSKA. ATP is bound at residue lysine 628.

It belongs to the class-I aminoacyl-tRNA synthetase family. IleS type 2 subfamily. Monomer. The cofactor is Zn(2+).

It is found in the cytoplasm. The enzyme catalyses tRNA(Ile) + L-isoleucine + ATP = L-isoleucyl-tRNA(Ile) + AMP + diphosphate. In terms of biological role, catalyzes the attachment of isoleucine to tRNA(Ile). As IleRS can inadvertently accommodate and process structurally similar amino acids such as valine, to avoid such errors it has two additional distinct tRNA(Ile)-dependent editing activities. One activity is designated as 'pretransfer' editing and involves the hydrolysis of activated Val-AMP. The other activity is designated 'posttransfer' editing and involves deacylation of mischarged Val-tRNA(Ile). In Treponema pallidum (strain Nichols), this protein is Isoleucine--tRNA ligase.